We begin with the raw amino-acid sequence, 375 residues long: MPRPIQAVIHGPALVNNLQVVRRHAADSRVWAVIKANAYGHGIERAYEGLRQADGFGLLDLDEAVRLRQLGWQGPILLLEGFFKPEDLALVEQYRLTTTVHCEEQLRMLELARLKGPVSIQLKINTGMSRLGFAPAAYRAAWEHARAISGIGTIVHMTHFSDADGPRGIDHQLAAFEQATQGLPGEASLSNSAATLWHPRAHRDWVRPGVILYGASPTGVAADIEGTGLMPAMTLKSELIAVQDLQPGATVGYGSRFEAEQPMRIGIVACGYADGYPRHAPGWDGNYTPVLVDGVRTRMVGRVSMDMITVDLAEVPGARVGAPVTLWGQGLPIDEVAHAAGTVGYELMCALAPRVPVTVEPAGAADAGETLGKAA.

Lysine 35 acts as the Proton acceptor; specific for D-alanine in catalysis. Lysine 35 is modified (N6-(pyridoxal phosphate)lysine). Arginine 130 lines the substrate pocket. Tyrosine 253 acts as the Proton acceptor; specific for L-alanine in catalysis. Methionine 305 provides a ligand contact to substrate.

Belongs to the alanine racemase family. The cofactor is pyridoxal 5'-phosphate.

The catalysed reaction is L-alanine = D-alanine. It functions in the pathway amino-acid biosynthesis; D-alanine biosynthesis; D-alanine from L-alanine: step 1/1. Its function is as follows. Catalyzes the interconversion of L-alanine and D-alanine. May also act on other amino acids. This chain is Alanine racemase (alr), found in Ralstonia nicotianae (strain ATCC BAA-1114 / GMI1000) (Ralstonia solanacearum).